The sequence spans 400 residues: S-adenosylmethionine synthase (400 aa).

136–141 (GQGSVD) serves as a coordination point for ATP.

It belongs to the AdoMet synthase 2 family. The cofactor is Mg(2+).

The enzyme catalyses L-methionine + ATP + H2O = S-adenosyl-L-methionine + phosphate + diphosphate. The protein operates within amino-acid biosynthesis; S-adenosyl-L-methionine biosynthesis; S-adenosyl-L-methionine from L-methionine: step 1/1. Its function is as follows. Catalyzes the formation of S-adenosylmethionine from methionine and ATP. The sequence is that of S-adenosylmethionine synthase (mat) from Thermoplasma acidophilum (strain ATCC 25905 / DSM 1728 / JCM 9062 / NBRC 15155 / AMRC-C165).